We begin with the raw amino-acid sequence, 126 residues long: Fluoride-specific ion channel FluC (126 aa).

4 helical membrane-spanning segments follow: residues 4-24 (SILA…FLGL), 36-56 (GTLA…ALFA), 68-88 (LIIT…AEVV), and 99-119 (AFAA…AGIA). Residues glycine 75 and threonine 78 each contribute to the Na(+) site.

Belongs to the fluoride channel Fluc/FEX (TC 1.A.43) family.

It is found in the cell inner membrane. It carries out the reaction fluoride(in) = fluoride(out). With respect to regulation, na(+) is not transported, but it plays an essential structural role and its presence is essential for fluoride channel function. Functionally, fluoride-specific ion channel. Important for reducing fluoride concentration in the cell, thus reducing its toxicity. This Chromobacterium violaceum (strain ATCC 12472 / DSM 30191 / JCM 1249 / CCUG 213 / NBRC 12614 / NCIMB 9131 / NCTC 9757 / MK) protein is Fluoride-specific ion channel FluC.